The following is a 382-amino-acid chain: Small ribosomal subunit protein mS35 (382 aa).

Gly residues predominate over residues 363-375 (GRGGKALPGGKGG). Positions 363–382 (GRGGKALPGGKGGKMQRSKR) are disordered.

The protein belongs to the mitochondrion-specific ribosomal protein mS35 family. As to quaternary structure, component of the mitochondrial small ribosomal subunit (mt-SSU). Mature N.crassa 74S mitochondrial ribosomes consist of a small (37S) and a large (54S) subunit. The 37S small subunit contains a 16S ribosomal RNA (16S mt-rRNA) and 32 different proteins. The 54S large subunit contains a 23S rRNA (23S mt-rRNA) and 42 different proteins.

The protein localises to the mitochondrion. Component of the mitochondrial ribosome (mitoribosome), a dedicated translation machinery responsible for the synthesis of mitochondrial genome-encoded proteins, including at least some of the essential transmembrane subunits of the mitochondrial respiratory chain. The mitoribosomes are attached to the mitochondrial inner membrane and translation products are cotranslationally integrated into the membrane. In Neurospora crassa (strain ATCC 24698 / 74-OR23-1A / CBS 708.71 / DSM 1257 / FGSC 987), this protein is Small ribosomal subunit protein mS35 (rsm24).